Reading from the N-terminus, the 569-residue chain is MSASKEIKSFLWTQSLRRELSGYCSNIKLQVVKDAQALLHGLDFSEVSNVQRLMRKERRDDNDLKRLRDLNQAVNNLVELKSTQQKSILRVGTLTSDDLLILAADLEKLKSKVIRTERPLSAGVYMGNLSSQQLDQRRALLNMIGMSGGNQGARAGRDGVVRVWDVKNAELLNNQFGTMPSLTLACLTKQGQVDLNDAVQALTDLGLIYTAKYPNTSDLDRLTQSHPILNMIDTKKSSLNISGYNFSLGAAVKAGACMLDGGNMLETIKVSPQTMDGILKSILKVKKALGMFISDTPGERNPYENILYKICLSGDGWPYIASRTSITGRAWENTVVDLESDGKPQKADSNNSSKSLQSAGFTAGLTYSQLMTLKDAMLQLDPNAKTWMDIEGRPEDPVEIALYQPSSGCYIHFFREPTDLKQFKQDAKYSHGIDVTDLFATQPGLTSAVIDALPRNMVITCQGSDDIRKLLESQGRKDIKLIDIALSKTDSRKYENAVWDQYKDLCHMHTGVVVEKKKRGGKEEITPHCALMDCIMFDAAVSGGLNTSVLRAVLPRDMVFRTSTPRVVL.

The binding site for the cap structure m7GTP stretch occupies residues 54–241; the sequence is MRKERRDDND…IDTKKSSLNI (188 aa). Positions 389 and 391 each coordinate Mn(2+). Zn(2+) is bound by residues Glu-399, Cys-506, His-509, and Cys-529. Asp-533 is a binding site for Mn(2+).

Belongs to the arenaviridae nucleocapsid protein family. In terms of assembly, homomultimerizes to form the nucleocapsid. Binds to viral genomic RNA. Interacts with glycoprotein G2. Interacts with protein Z; this interaction probably directs the encapsidated genome to budding sites. Interacts with protein L; this interaction does not interfere with Z-L interaction. Interacts with host IKBKE (via Protein kinase domain); the interaction inhibits IKBKE kinase activity.

It localises to the virion. Its subcellular location is the host cytoplasm. Its function is as follows. Encapsidates the genome, protecting it from nucleases. The encapsidated genomic RNA is termed the nucleocapsid (NC). Serves as template for viral transcription and replication. The increased presence of protein N in host cell does not seem to trigger the switch from transcription to replication as observed in other negative strain RNA viruses. Through the interaction with host IKBKE, strongly inhibits the phosphorylation and nuclear translocation of host IRF3, a protein involved in interferon activation pathway, leading to the inhibition of interferon-beta and IRF3-dependent promoters activation. Also encodes a functional 3'-5' exoribonuclease that degrades preferentially dsRNA substrates and thereby participates in the suppression of interferon induction. The polypeptide is Nucleoprotein (Lassa virus (strain Mouse/Sierra Leone/Josiah/1976) (LASV)).